Reading from the N-terminus, the 129-residue chain is Iron-sulfur cluster assembly 1 homolog, mitochondrial (129 aa).

A mitochondrion-targeting transit peptide spans 1 to 12 (MSASLVRATVRA). Positions 57, 121, and 123 each coordinate Fe cation.

This sequence belongs to the HesB/IscA family. In terms of assembly, interacts with CRY2, but not with CRY1 (in vitro).

The protein resides in the mitochondrion. Involved in the maturation of mitochondrial 4Fe-4S proteins functioning late in the iron-sulfur cluster assembly pathway. Probably involved in the binding of an intermediate of Fe/S cluster assembly. The protein is Iron-sulfur cluster assembly 1 homolog, mitochondrial (ISCA1) of Bos taurus (Bovine).